Here is a 122-residue protein sequence, read N- to C-terminus: Large ribosomal subunit protein uL14 (122 aa).

It belongs to the universal ribosomal protein uL14 family. Part of the 50S ribosomal subunit. Forms a cluster with proteins L3 and L19. In the 70S ribosome, L14 and L19 interact and together make contacts with the 16S rRNA in bridges B5 and B8.

Functionally, binds to 23S rRNA. Forms part of two intersubunit bridges in the 70S ribosome. This is Large ribosomal subunit protein uL14 from Staphylococcus aureus (strain MW2).